A 261-amino-acid polypeptide reads, in one-letter code: 8-demethyl-8-(2,3-dimethoxy-alpha-L-rhamnosyl)-tetracenomycin-C 4'-O-methyltransferase (261 aa).

S-adenosyl-L-methionine is bound by residues 53-54, 81-85, 111-115, Phe167, 185-186, and Ser191; these read TM, ETGVW, DSFEG, and DG. Asp185 provides a ligand contact to Mg(2+). Residues Asp212 and Asp213 each coordinate Mg(2+).

This sequence belongs to the methyltransferase TylF/MycF family. It depends on Mg(2+) as a cofactor.

The catalysed reaction is 8-demethyl-8-(2,3-di-O-methyl-alpha-L-rhamnosyl)-tetracenomycin C + S-adenosyl-L-methionine = 8-demethyl-8-(2,3,4-tri-O-methyl-alpha-L-rhamnosyl)-tetracenomycin C + S-adenosyl-L-homocysteine + H(+). The protein operates within antibiotic biosynthesis. In terms of biological role, O-methyltransferase involved in the biosynthesis of the permethylated L-rhamnose moiety of elloramycin, an antitumor polyketide. Mediates the methylation of the hydroxy groups at the 4'-position after the sugar moiety has been attached to the aglycon. This chain is 8-demethyl-8-(2,3-dimethoxy-alpha-L-rhamnosyl)-tetracenomycin-C 4'-O-methyltransferase, found in Streptomyces olivaceus.